The chain runs to 94 residues: Pyrimidine/purine nucleoside phosphorylase (94 aa).

This sequence belongs to the nucleoside phosphorylase PpnP family.

The catalysed reaction is a purine D-ribonucleoside + phosphate = a purine nucleobase + alpha-D-ribose 1-phosphate. It carries out the reaction adenosine + phosphate = alpha-D-ribose 1-phosphate + adenine. It catalyses the reaction cytidine + phosphate = cytosine + alpha-D-ribose 1-phosphate. The enzyme catalyses guanosine + phosphate = alpha-D-ribose 1-phosphate + guanine. The catalysed reaction is inosine + phosphate = alpha-D-ribose 1-phosphate + hypoxanthine. It carries out the reaction thymidine + phosphate = 2-deoxy-alpha-D-ribose 1-phosphate + thymine. It catalyses the reaction uridine + phosphate = alpha-D-ribose 1-phosphate + uracil. The enzyme catalyses xanthosine + phosphate = alpha-D-ribose 1-phosphate + xanthine. Its function is as follows. Catalyzes the phosphorolysis of diverse nucleosides, yielding D-ribose 1-phosphate and the respective free bases. Can use uridine, adenosine, guanosine, cytidine, thymidine, inosine and xanthosine as substrates. Also catalyzes the reverse reactions. This Cronobacter sakazakii (strain ATCC BAA-894) (Enterobacter sakazakii) protein is Pyrimidine/purine nucleoside phosphorylase.